Here is a 118-residue protein sequence, read N- to C-terminus: Basic leucine zipper transcriptional factor ATF-like 3 (118 aa).

The tract at residues 1-69 (MSQGPPAVSV…HESLEQENSV (69 aa)) is disordered. Phosphoserine occurs at positions 2 and 24. A bZIP domain is found at 28 to 91 (DDRKVRRREK…RHLSEVLKEH (64 aa)). A basic motif region spans residues 30–55 (RKVRRREKNRVAAQRSRKKQTQKADK). Basic and acidic residues predominate over residues 51–69 (QKADKLHEEHESLEQENSV). A leucine-zipper region spans residues 56–84 (LHEEHESLEQENSVLRREISKLKEELRHL).

The protein belongs to the bZIP family. In terms of assembly, heterodimer; heterodimerizes with JUN family proteins. Interacts with JUN. As to expression, highly expressed in CD8-alpha(+) classical dendritic cells (cDCs), with low to absent expression in other immune cells and non-immune tissues.

The protein resides in the nucleus. Functionally, AP-1 family transcription factor that controls the differentiation of CD8(+) thymic conventional dendritic cells in the immune system. Acts via the formation of a heterodimer with JUN family proteins that recognizes and binds DNA sequence 5'-TGA[CG]TCA-3' and regulates expression of target genes. Required for development of CD8-alpha(+) classical dendritic cells (cDCs) and related CD103(+) dendritic cells that cross-present antigens to CD8 T-cells and produce interleukin-12 (IL12) in response to pathogens. The protein is Basic leucine zipper transcriptional factor ATF-like 3 (Batf3) of Mus musculus (Mouse).